The primary structure comprises 601 residues: Kelch repeat and BTB domain-containing protein 8 (601 aa).

Residues 1–25 (MAASADLSKSSPTPNGIPSSDPASD) form a disordered region. Over residues 7–22 (LSKSSPTPNGIPSSDP) the composition is skewed to polar residues. In terms of domain architecture, BTB spans 49–117 (TDIVVEVDHG…AYTSRVILTE (69 aa)). A BACK domain is found at 153–252 (IGVFIFADHY…PLMEDTFIEK (100 aa)). Kelch repeat units lie at residues 336-390 (DIYI…YCCG), 391-441 (KMYA…EYKE), 443-481 (IYVLQGEFFLFYEPQKDYWGFLTPMTVPRIQGLAAVYKD), 483-532 (IYYI…LFQN), and 542-588 (QVTV…FECA).

Belongs to the KBTBD8 family. As to quaternary structure, component of the BCR(KBTBD8) E3 ubiquitin ligase complex, at least composed of CUL3, KBTBD8 and RBX1.

It is found in the cytoplasm. Its subcellular location is the cytoskeleton. The protein resides in the spindle. It localises to the golgi apparatus. Its function is as follows. Substrate-specific adapter of a BCR (BTB-CUL3-RBX1) E3 ubiquitin ligase complex that acts as a regulator of neural crest specification. The BCR(KBTBD8) complex acts by mediating monoubiquitination of NOLC1 and TCOF1: monoubiquitination promotes the formation of a NOLC1-TCOF1 complex that acts as a platform to connect RNA polymerase I with enzymes responsible for ribosomal processing and modification, leading to remodel the translational program of differentiating cells in favor of neural crest specification. The sequence is that of Kelch repeat and BTB domain-containing protein 8 (KBTBD8) from Homo sapiens (Human).